The chain runs to 340 residues: S-adenosylmethionine:tRNA ribosyltransferase-isomerase (340 aa).

This sequence belongs to the QueA family. Monomer.

It is found in the cytoplasm. It catalyses the reaction 7-aminomethyl-7-carbaguanosine(34) in tRNA + S-adenosyl-L-methionine = epoxyqueuosine(34) in tRNA + adenine + L-methionine + 2 H(+). It functions in the pathway tRNA modification; tRNA-queuosine biosynthesis. Transfers and isomerizes the ribose moiety from AdoMet to the 7-aminomethyl group of 7-deazaguanine (preQ1-tRNA) to give epoxyqueuosine (oQ-tRNA). The sequence is that of S-adenosylmethionine:tRNA ribosyltransferase-isomerase from Francisella tularensis subsp. holarctica (strain OSU18).